A 629-amino-acid polypeptide reads, in one-letter code: tRNA uridine 5-carboxymethylaminomethyl modification enzyme MnmG (629 aa).

Residues 13–18 (GGGHAG), valine 125, and serine 180 contribute to the FAD site. 273 to 287 (GPRYCPSIEDKVMRF) contributes to the NAD(+) binding site. Glutamine 370 serves as a coordination point for FAD.

The protein belongs to the MnmG family. Homodimer. Heterotetramer of two MnmE and two MnmG subunits. FAD serves as cofactor.

It localises to the cytoplasm. Its function is as follows. NAD-binding protein involved in the addition of a carboxymethylaminomethyl (cmnm) group at the wobble position (U34) of certain tRNAs, forming tRNA-cmnm(5)s(2)U34. This is tRNA uridine 5-carboxymethylaminomethyl modification enzyme MnmG from Klebsiella pneumoniae subsp. pneumoniae (strain ATCC 700721 / MGH 78578).